Consider the following 280-residue polypeptide: Proteasome subunit beta (280 aa).

Positions 1 to 53 (MSEYSAGRSGFSPAYLDRVGSSFTDFLAAAAPHLLPGSRPVPQIPVGNVTPHG) are cleaved as a propeptide — removed in mature form; by autocatalysis. Threonine 54 serves as the catalytic Nucleophile.

It belongs to the peptidase T1B family. In terms of assembly, the 20S proteasome core is composed of 14 alpha and 14 beta subunits that assemble into four stacked heptameric rings, resulting in a barrel-shaped structure. The two inner rings, each composed of seven catalytic beta subunits, are sandwiched by two outer rings, each composed of seven alpha subunits. The catalytic chamber with the active sites is on the inside of the barrel. Has a gated structure, the ends of the cylinder being occluded by the N-termini of the alpha-subunits. Is capped by the proteasome-associated ATPase, ARC.

It is found in the cytoplasm. The catalysed reaction is Cleavage of peptide bonds with very broad specificity.. It participates in protein degradation; proteasomal Pup-dependent pathway. The formation of the proteasomal ATPase ARC-20S proteasome complex, likely via the docking of the C-termini of ARC into the intersubunit pockets in the alpha-rings, may trigger opening of the gate for substrate entry. Interconversion between the open-gate and close-gate conformations leads to a dynamic regulation of the 20S proteasome proteolysis activity. Its function is as follows. Component of the proteasome core, a large protease complex with broad specificity involved in protein degradation. In Geodermatophilus obscurus (strain ATCC 25078 / DSM 43160 / JCM 3152 / CCUG 61914 / KCC A-0152 / KCTC 9177 / NBRC 13315 / NRRL B-3577 / G-20), this protein is Proteasome subunit beta.